The following is a 209-amino-acid chain: Uracil phosphoribosyltransferase (209 aa).

5-phospho-alpha-D-ribose 1-diphosphate contacts are provided by residues Arg79, Arg104, and 131-139; that span reads DPMLATGGS. Residues Ile194 and 199–201 each bind uracil; that span reads GDA. Residue Asp200 participates in 5-phospho-alpha-D-ribose 1-diphosphate binding.

Belongs to the UPRTase family. It depends on Mg(2+) as a cofactor.

It carries out the reaction UMP + diphosphate = 5-phospho-alpha-D-ribose 1-diphosphate + uracil. Its pathway is pyrimidine metabolism; UMP biosynthesis via salvage pathway; UMP from uracil: step 1/1. With respect to regulation, allosterically activated by GTP. Catalyzes the conversion of uracil and 5-phospho-alpha-D-ribose 1-diphosphate (PRPP) to UMP and diphosphate. The chain is Uracil phosphoribosyltransferase from Clostridium beijerinckii (strain ATCC 51743 / NCIMB 8052) (Clostridium acetobutylicum).